The following is a 227-amino-acid chain: Cytochrome c oxidase subunit 2 (227 aa).

The Mitochondrial intermembrane segment spans residues 1 to 26; sequence MATWSNFNLQNSASPLMEQIIFFHDH. Residues 27-51 traverse the membrane as a helical segment; sequence TLVILIMITILVGYLMISLFFNSYI. At 52 to 62 the chain is on the mitochondrial matrix side; the sequence is NRFLLEGQMIE. A helical transmembrane segment spans residues 63–81; the sequence is LIWTILPAITLIFIALPSL. Residues 82–227 lie on the Mitochondrial intermembrane side of the membrane; sequence RLLYLLDELN…NFINWINNYS (146 aa). Residues H161, C196, E198, C200, H204, and M207 each contribute to the Cu cation site. E198 contacts Mg(2+).

It belongs to the cytochrome c oxidase subunit 2 family. In terms of assembly, component of the cytochrome c oxidase (complex IV, CIV), a multisubunit enzyme composed of a catalytic core of 3 subunits and several supernumerary subunits. The complex exists as a monomer or a dimer and forms supercomplexes (SCs) in the inner mitochondrial membrane with ubiquinol-cytochrome c oxidoreductase (cytochrome b-c1 complex, complex III, CIII). Requires Cu cation as cofactor.

It localises to the mitochondrion inner membrane. It catalyses the reaction 4 Fe(II)-[cytochrome c] + O2 + 8 H(+)(in) = 4 Fe(III)-[cytochrome c] + 2 H2O + 4 H(+)(out). Component of the cytochrome c oxidase, the last enzyme in the mitochondrial electron transport chain which drives oxidative phosphorylation. The respiratory chain contains 3 multisubunit complexes succinate dehydrogenase (complex II, CII), ubiquinol-cytochrome c oxidoreductase (cytochrome b-c1 complex, complex III, CIII) and cytochrome c oxidase (complex IV, CIV), that cooperate to transfer electrons derived from NADH and succinate to molecular oxygen, creating an electrochemical gradient over the inner membrane that drives transmembrane transport and the ATP synthase. Cytochrome c oxidase is the component of the respiratory chain that catalyzes the reduction of oxygen to water. Electrons originating from reduced cytochrome c in the intermembrane space (IMS) are transferred via the dinuclear copper A center (CU(A)) of subunit 2 and heme A of subunit 1 to the active site in subunit 1, a binuclear center (BNC) formed by heme A3 and copper B (CU(B)). The BNC reduces molecular oxygen to 2 water molecules using 4 electrons from cytochrome c in the IMS and 4 protons from the mitochondrial matrix. The sequence is that of Cytochrome c oxidase subunit 2 (COII) from Choristoneura fumiferana (Spruce budworm moth).